A 273-amino-acid polypeptide reads, in one-letter code: 4-hydroxy-tetrahydrodipicolinate reductase (273 aa).

NAD(+) contacts are provided by residues 10–15 (GAGGRM), glutamate 36, 100–102 (GTT), and 124–127 (SGNM). The active-site Proton donor/acceptor is histidine 157. Histidine 158 lines the (S)-2,3,4,5-tetrahydrodipicolinate pocket. The active-site Proton donor is lysine 161. 167–168 (GT) lines the (S)-2,3,4,5-tetrahydrodipicolinate pocket.

This sequence belongs to the DapB family.

It localises to the cytoplasm. The catalysed reaction is (S)-2,3,4,5-tetrahydrodipicolinate + NAD(+) + H2O = (2S,4S)-4-hydroxy-2,3,4,5-tetrahydrodipicolinate + NADH + H(+). It carries out the reaction (S)-2,3,4,5-tetrahydrodipicolinate + NADP(+) + H2O = (2S,4S)-4-hydroxy-2,3,4,5-tetrahydrodipicolinate + NADPH + H(+). Its pathway is amino-acid biosynthesis; L-lysine biosynthesis via DAP pathway; (S)-tetrahydrodipicolinate from L-aspartate: step 4/4. Its function is as follows. Catalyzes the conversion of 4-hydroxy-tetrahydrodipicolinate (HTPA) to tetrahydrodipicolinate. The protein is 4-hydroxy-tetrahydrodipicolinate reductase of Rhodopseudomonas palustris (strain BisA53).